The primary structure comprises 240 residues: Small ribosomal subunit protein uS2 (240 aa).

Belongs to the universal ribosomal protein uS2 family.

The chain is Small ribosomal subunit protein uS2 from Wigglesworthia glossinidia brevipalpis.